A 108-amino-acid polypeptide reads, in one-letter code: Small ribosomal subunit protein eS25B (108 aa).

Low complexity predominate over residues 1-20 (MPPKQQLSKAAKAAAALAGG). The interval 1–30 (MPPKQQLSKAAKAAAALAGGKKSKKKWSKK) is disordered. Pro-2 is modified (n,N-dimethylproline; by NTM1). The segment covering 21–30 (KKSKKKWSKK) has biased composition (basic residues).

The protein belongs to the eukaryotic ribosomal protein eS25 family. As to quaternary structure, component of the small ribosomal subunit (SSU). Mature yeast ribosomes consist of a small (40S) and a large (60S) subunit. The 40S small subunit contains 1 molecule of ribosomal RNA (18S rRNA) and 33 different proteins (encoded by 57 genes). The large 60S subunit contains 3 rRNA molecules (25S, 5.8S and 5S rRNA) and 46 different proteins (encoded by 81 genes).

Its subcellular location is the cytoplasm. In terms of biological role, component of the ribosome, a large ribonucleoprotein complex responsible for the synthesis of proteins in the cell. The small ribosomal subunit (SSU) binds messenger RNAs (mRNAs) and translates the encoded message by selecting cognate aminoacyl-transfer RNA (tRNA) molecules. The large subunit (LSU) contains the ribosomal catalytic site termed the peptidyl transferase center (PTC), which catalyzes the formation of peptide bonds, thereby polymerizing the amino acids delivered by tRNAs into a polypeptide chain. The nascent polypeptides leave the ribosome through a tunnel in the LSU and interact with protein factors that function in enzymatic processing, targeting, and the membrane insertion of nascent chains at the exit of the ribosomal tunnel. The polypeptide is Small ribosomal subunit protein eS25B (Saccharomyces cerevisiae (strain ATCC 204508 / S288c) (Baker's yeast)).